Here is a 529-residue protein sequence, read N- to C-terminus: Bifunctional purine biosynthesis protein PurH (529 aa).

The MGS-like domain maps to 1-148; the sequence is MQQRRPVRRA…KNHKDVAIVV (148 aa). Position 287 is an N6-acetyllysine (Lys287).

It belongs to the PurH family.

It carries out the reaction (6R)-10-formyltetrahydrofolate + 5-amino-1-(5-phospho-beta-D-ribosyl)imidazole-4-carboxamide = 5-formamido-1-(5-phospho-D-ribosyl)imidazole-4-carboxamide + (6S)-5,6,7,8-tetrahydrofolate. The catalysed reaction is IMP + H2O = 5-formamido-1-(5-phospho-D-ribosyl)imidazole-4-carboxamide. Its pathway is purine metabolism; IMP biosynthesis via de novo pathway; 5-formamido-1-(5-phospho-D-ribosyl)imidazole-4-carboxamide from 5-amino-1-(5-phospho-D-ribosyl)imidazole-4-carboxamide (10-formyl THF route): step 1/1. It functions in the pathway purine metabolism; IMP biosynthesis via de novo pathway; IMP from 5-formamido-1-(5-phospho-D-ribosyl)imidazole-4-carboxamide: step 1/1. This chain is Bifunctional purine biosynthesis protein PurH, found in Escherichia coli O8 (strain IAI1).